The primary structure comprises 255 residues: Urease accessory protein UreD 1 (255 aa).

The protein belongs to the UreD family. UreD, UreF and UreG form a complex that acts as a GTP-hydrolysis-dependent molecular chaperone, activating the urease apoprotein by helping to assemble the nickel containing metallocenter of UreC. The UreE protein probably delivers the nickel.

The protein resides in the cytoplasm. Functionally, required for maturation of urease via the functional incorporation of the urease nickel metallocenter. This is Urease accessory protein UreD 1 from Saccharopolyspora erythraea (strain ATCC 11635 / DSM 40517 / JCM 4748 / NBRC 13426 / NCIMB 8594 / NRRL 2338).